A 500-amino-acid polypeptide reads, in one-letter code: AAA-ATPase At3g28580 (500 aa).

Residues 7–29 (LWTNTGSALATLMFVYTIFKQFF) form a helical membrane-spanning segment. Residues 174–193 (NRERKLYSNTPGQSHGNNSK) are disordered. Residues 180–193 (YSNTPGQSHGNNSK) show a composition bias toward polar residues. An ATP-binding site is contributed by 247 to 254 (GPPGTGKS). Positions 462–500 (KEEAKKKVEEEEEEKQRKKEKVKEIEAEKEKKKKIEEEN) are disordered.

The protein belongs to the AAA ATPase family. BCS1 subfamily. Requires Mg(2+) as cofactor.

Its subcellular location is the membrane. The enzyme catalyses ATP + H2O = ADP + phosphate + H(+). The sequence is that of AAA-ATPase At3g28580 from Arabidopsis thaliana (Mouse-ear cress).